A 360-amino-acid chain; its full sequence is Holliday junction branch migration complex subunit RuvB (360 aa).

The interval 4–196 (HEEDLDQAEE…FGFTAHLEFY (193 aa)) is large ATPase domain (RuvB-L). Residues Leu35, Arg36, Gly77, Lys80, Thr81, Thr82, 143–145 (EDF), Arg186, Tyr196, and Arg233 contribute to the ATP site. Mg(2+) is bound at residue Thr81. The small ATPAse domain (RuvB-S) stretch occupies residues 197–267 (EPDELDLIVQ…VAQDALDLYE (71 aa)). The interval 270–360 (QLGLDRLDRG…PESDPPLFED (91 aa)) is head domain (RuvB-H). Positions 306, 325, and 330 each coordinate DNA.

Belongs to the RuvB family. Homohexamer. Forms an RuvA(8)-RuvB(12)-Holliday junction (HJ) complex. HJ DNA is sandwiched between 2 RuvA tetramers; dsDNA enters through RuvA and exits via RuvB. An RuvB hexamer assembles on each DNA strand where it exits the tetramer. Each RuvB hexamer is contacted by two RuvA subunits (via domain III) on 2 adjacent RuvB subunits; this complex drives branch migration. In the full resolvosome a probable DNA-RuvA(4)-RuvB(12)-RuvC(2) complex forms which resolves the HJ.

Its subcellular location is the cytoplasm. The catalysed reaction is ATP + H2O = ADP + phosphate + H(+). Functionally, the RuvA-RuvB-RuvC complex processes Holliday junction (HJ) DNA during genetic recombination and DNA repair, while the RuvA-RuvB complex plays an important role in the rescue of blocked DNA replication forks via replication fork reversal (RFR). RuvA specifically binds to HJ cruciform DNA, conferring on it an open structure. The RuvB hexamer acts as an ATP-dependent pump, pulling dsDNA into and through the RuvAB complex. RuvB forms 2 homohexamers on either side of HJ DNA bound by 1 or 2 RuvA tetramers; 4 subunits per hexamer contact DNA at a time. Coordinated motions by a converter formed by DNA-disengaged RuvB subunits stimulates ATP hydrolysis and nucleotide exchange. Immobilization of the converter enables RuvB to convert the ATP-contained energy into a lever motion, pulling 2 nucleotides of DNA out of the RuvA tetramer per ATP hydrolyzed, thus driving DNA branch migration. The RuvB motors rotate together with the DNA substrate, which together with the progressing nucleotide cycle form the mechanistic basis for DNA recombination by continuous HJ branch migration. Branch migration allows RuvC to scan DNA until it finds its consensus sequence, where it cleaves and resolves cruciform DNA. The polypeptide is Holliday junction branch migration complex subunit RuvB (Nocardioides sp. (strain ATCC BAA-499 / JS614)).